The following is a 218-amino-acid chain: Ras-related protein Rab-27B (218 aa).

T2 carries the N-acetylthreonine modification. A GTP-binding site is contributed by 16 to 24 (GDSGVGKTT). The Effector region motif lies at 38–46 (FITTVGIDF). Residues 74-78 (DTAGQ), 133-136 (NKAD), and 163-165 (SAA) each bind GTP. C123 and C188 are oxidised to a cystine. Residues C216 and C218 are each lipidated (S-geranylgeranyl cysteine). A Cysteine methyl ester modification is found at C218.

It belongs to the small GTPase superfamily. Rab family. Interacts with SYTL2, SYTL4, MYRIP and MLPH. Interacts with RPH3A and RPH3A. Interacts (GDP-bound form preferentially) with DENND10.

The protein localises to the membrane. The protein resides in the late endosome. The enzyme catalyses GTP + H2O = GDP + phosphate + H(+). Regulated by guanine nucleotide exchange factors (GEFs) which promote the exchange of bound GDP for free GTP, GTPase activating proteins (GAPs) which increase the GTP hydrolysis activity, and GDP dissociation inhibitors which inhibit the dissociation of the nucleotide from the GTPase. Activated by GEFs such as DENND10. In terms of biological role, small GTPase which cycles between active GTP-bound and inactive GDP-bound states. In its active state, binds to a variety of effector proteins to regulate homeostasis of late endocytic pathway, including endosomal positioning, maturation and secretion. Plays a role in NTRK2/TRKB axonal anterograde transport by facilitating the association of NTRK2/TRKB with KLC1. May be involved in targeting uroplakins to urothelial apical membranes. The polypeptide is Ras-related protein Rab-27B (Rab27b) (Rattus norvegicus (Rat)).